Reading from the N-terminus, the 237-residue chain is Orotidine 5'-phosphate decarboxylase (237 aa).

Residues aspartate 11, lysine 34, 61–70 (DLKLHDIPNT), threonine 123, arginine 185, glutamine 194, glycine 214, and arginine 215 contribute to the substrate site. Lysine 63 acts as the Proton donor in catalysis.

The protein belongs to the OMP decarboxylase family. Type 1 subfamily. As to quaternary structure, homodimer.

The catalysed reaction is orotidine 5'-phosphate + H(+) = UMP + CO2. Its pathway is pyrimidine metabolism; UMP biosynthesis via de novo pathway; UMP from orotate: step 2/2. Its function is as follows. Catalyzes the decarboxylation of orotidine 5'-monophosphate (OMP) to uridine 5'-monophosphate (UMP). This is Orotidine 5'-phosphate decarboxylase from Ligilactobacillus salivarius (strain UCC118) (Lactobacillus salivarius).